The following is a 544-amino-acid chain: Sialidase (544 aa).

A signal peptide spans 1–22 (MKKAVILFSLFCFLCAIPVVQA). BNR repeat units lie at residues 239–250 (SRSTDGGKTWEK), 318–329 (AKSTDDGKTWSA), and 378–389 (MYSKDGGKNWKM). Glutamate 399 is an active-site residue. A substrate-binding site is contributed by arginine 415. Residues 425-436 (AITKDLGKTWTE) form a BNR 4 repeat. Arginine 479 lines the substrate pocket. The BNR 5 repeat unit spans residues 485-496 (KISLDGGVTWSP).

It belongs to the glycosyl hydrolase 33 family.

Its subcellular location is the periplasm. The catalysed reaction is Hydrolysis of alpha-(2-&gt;3)-, alpha-(2-&gt;6)-, alpha-(2-&gt;8)- glycosidic linkages of terminal sialic acid residues in oligosaccharides, glycoproteins, glycolipids, colominic acid and synthetic substrates.. In terms of biological role, sialidases have been suggested to be pathogenic factors in microbial infections. The protein is Sialidase (nanH) of Bacteroides fragilis (strain YCH46).